Reading from the N-terminus, the 176-residue chain is Ribosome maturation factor RimM (176 aa).

The region spanning 93–168 is the PRC barrel domain; that stretch reads DDEVYIEDIL…TIRITPPPGL (76 aa).

It belongs to the RimM family. In terms of assembly, binds ribosomal protein uS19.

The protein localises to the cytoplasm. Functionally, an accessory protein needed during the final step in the assembly of 30S ribosomal subunit, possibly for assembly of the head region. Essential for efficient processing of 16S rRNA. May be needed both before and after RbfA during the maturation of 16S rRNA. It has affinity for free ribosomal 30S subunits but not for 70S ribosomes. The protein is Ribosome maturation factor RimM of Oleidesulfovibrio alaskensis (strain ATCC BAA-1058 / DSM 17464 / G20) (Desulfovibrio alaskensis).